The primary structure comprises 550 residues: (+)-germacrene D synthase (550 aa).

Residues Asp-304, Asp-308, and Glu-455 each contribute to the Mg(2+) site. The DDXXD motif motif lies at 304–308 (DDIYD).

Belongs to the terpene synthase family. Tpsa subfamily. It depends on Mg(2+) as a cofactor. Mn(2+) serves as cofactor. Co(2+) is required as a cofactor. Requires Ni(2+) as cofactor.

The protein resides in the cytoplasm. It catalyses the reaction (2E,6E)-farnesyl diphosphate = (+)-germacrene D + diphosphate. It functions in the pathway secondary metabolite biosynthesis; terpenoid biosynthesis. Involved in the biosynthesis of germacrene D. Can use farnesyl diphosphate as substrate, but not geranyl diphosphate. Produces mainly (+)-germacrene D along with germacrene B and a number of minor by-products. In Zingiber officinale (Ginger), this protein is (+)-germacrene D synthase.